A 240-amino-acid polypeptide reads, in one-letter code: Superoxide dismutase [Cu-Zn] (240 aa).

An N-terminal signal peptide occupies residues 1-32; the sequence is MPKPADHRNHAAVSTSVLSALFLGAGAALLSA. A lipid anchor (N-palmitoyl cysteine) is attached at cysteine 33. Cysteine 33 carries the S-diacylglycerol cysteine lipid modification. Composition is skewed to polar residues over residues 36 to 51 and 68 to 77; these read PQHA…SIWT and GAQSLTSTLT. The interval 36 to 77 is disordered; that stretch reads PQHASTVPGTTPSIWTGSPAPSGLSGHDEESPGAQSLTSTLT. 2 residues coordinate Cu cation: histidine 116 and histidine 118. Residues cysteine 123 and cysteine 234 are joined by a disulfide bond. Zn(2+)-binding residues include histidine 146 and aspartate 158. Residue histidine 195 participates in Cu cation binding.

This sequence belongs to the Cu-Zn superoxide dismutase family. Requires Cu cation as cofactor. The cofactor is Zn(2+).

It localises to the cell membrane. It catalyses the reaction 2 superoxide + 2 H(+) = H2O2 + O2. Inhibited by the copper chelator diethyl dithiocarbamate. Its function is as follows. Destroys radicals which are normally produced within the cells and which are toxic to biological systems. May play a role in favoring mycobacterial survival in phagocytes. The chain is Superoxide dismutase [Cu-Zn] (sodC) from Mycobacterium bovis (strain ATCC BAA-935 / AF2122/97).